The primary structure comprises 128 residues: UPF0102 protein Rfer_3873 (128 aa).

The segment covering 1–15 (MAIPQIKTQVGTSKQ) has biased composition (polar residues). A disordered region spans residues 1-20 (MAIPQIKTQVGTSKQAGDAA).

Belongs to the UPF0102 family.

This Albidiferax ferrireducens (strain ATCC BAA-621 / DSM 15236 / T118) (Rhodoferax ferrireducens) protein is UPF0102 protein Rfer_3873.